The sequence spans 503 residues: Aromatase (503 aa).

C437 lines the heme pocket.

It belongs to the cytochrome P450 family. Heme serves as cofactor.

The protein resides in the membrane. The enzyme catalyses testosterone + 3 reduced [NADPH--hemoprotein reductase] + 3 O2 = 17beta-estradiol + formate + 3 oxidized [NADPH--hemoprotein reductase] + 4 H2O + 4 H(+). It carries out the reaction androst-4-ene-3,17-dione + 3 reduced [NADPH--hemoprotein reductase] + 3 O2 = estrone + formate + 3 oxidized [NADPH--hemoprotein reductase] + 4 H2O + 4 H(+). Functionally, catalyzes the formation of aromatic C18 estrogens from C19 androgens. The polypeptide is Aromatase (CYP19A1) (Oryctolagus cuniculus (Rabbit)).